The following is a 352-amino-acid chain: Dysbindin (352 aa).

Ser-11 is modified (phosphoserine). A coiled-coil region spans residues 92 to 180 (TSLAELQEQL…AELDTEHAQK (89 aa)). A Nuclear export signal motif is present at residues 243–256 (LMDLSDQEALDVFL). Residues 267-352 (SPGLEMESNP…SDQCDSTQDI (86 aa)) form a disordered region. Residues 274–285 (SNPSQNEMNLQI) are compositionally biased toward polar residues. Positions 286–301 (PNPSESASQPPASPSA) are enriched in low complexity. Phosphoserine occurs at positions 340 and 343.

This sequence belongs to the dysbindin family. Interacts (via its coiled coil domain) with KXD1. Interacts with AP3B2, TRIM32, CMYA5, PI4K2 and RNF151. Interacts with the DNA-dependent protein kinase complex DNA-PK; the interaction phosphorylates DTNBP1 in vitro. Interacts directly in this complex with XRCC5 and XRCC6. Interacts with XPO1; the interaction exports DTNBP1 out of the nucleus. Component of the biogenesis of lysosome-related organelles complex 1 (BLOC-1) composed of at least BLOC1S1, BLOC1S2, BLOC1S3, BLOC1S4, BLOC1S5, BLOC1S6, DTNBP1/BLOC1S7 and SNAPIN/BLOC1S8. Interacts directly in the complex with BLOC1S5, BLOC1S6 and SNAPIN/BLOC1S8. The BLOC-1 complex associates with the AP-3 protein complex and membrane protein cargos. This BLOC-1 complex also associates with the BLOC-2 complex in endosomes. Binds to DTNA and DTNB but may not be a physiological binding partner. Interacts with AP3M1. Post-translationally, ubiquitinated by TRIM32. Ubiquitination leads to DTNBP1 degradation. As to expression, detected in hippocampus neurons (at protein level). Ubiquitously expressed. The highest expression is observed in testis, liver, kidney, brain, heart and lung. In the brain, found primarily in axon bundles and axon terminals, notably in the cerebellum and hippocampus. Expressed at lower levels in stomach, small intestine and skeletal muscle, where it is detected at the sarcolemma.

Its subcellular location is the cytoplasm. It is found in the cytoplasmic vesicle membrane. The protein localises to the cytoplasmic vesicle. It localises to the secretory vesicle. The protein resides in the synaptic vesicle membrane. Its subcellular location is the endosome membrane. It is found in the melanosome membrane. The protein localises to the nucleus. It localises to the postsynaptic density. The protein resides in the presynaptic cell membrane. Its subcellular location is the endoplasmic reticulum. Component of the BLOC-1 complex, a complex that is required for normal biogenesis of lysosome-related organelles (LRO), such as platelet dense granules and melanosomes. In concert with the AP-3 complex, the BLOC-1 complex is required to target membrane protein cargos into vesicles assembled at cell bodies for delivery into neurites and nerve terminals. The BLOC-1 complex, in association with SNARE proteins, is also proposed to be involved in neurite extension. Associates with the BLOC-2 complex to facilitate the transport of TYRP1 independent of AP-3 function. Plays a role in synaptic vesicle trafficking and in neurotransmitter release. Plays a role in the regulation of cell surface exposure of DRD2. May play a role in actin cytoskeleton reorganization and neurite outgrowth. May modulate MAPK8 phosphorylation. Appears to promote neuronal transmission and viability through regulating the expression of SNAP25 and SYN1, modulating PI3-kinase-Akt signaling and influencing glutamatergic release. Regulates the expression of SYN1 through binding to its promoter. Modulates prefrontal cortical activity via the dopamine/D2 pathway. The protein is Dysbindin (Dtnbp1) of Rattus norvegicus (Rat).